A 780-amino-acid polypeptide reads, in one-letter code: uncharacterized protein (780 aa).

Positions 10–80 (NNNIIKLNIG…MRTGTFTLPY (71 aa)) constitute a BTB domain.

This is an uncharacterized protein from Dictyostelium discoideum (Social amoeba).